Consider the following 305-residue polypeptide: Methionyl-tRNA formyltransferase (305 aa).

111 to 114 (SILP) serves as a coordination point for (6S)-5,6,7,8-tetrahydrofolate.

This sequence belongs to the Fmt family.

It carries out the reaction L-methionyl-tRNA(fMet) + (6R)-10-formyltetrahydrofolate = N-formyl-L-methionyl-tRNA(fMet) + (6S)-5,6,7,8-tetrahydrofolate + H(+). Functionally, attaches a formyl group to the free amino group of methionyl-tRNA(fMet). The formyl group appears to play a dual role in the initiator identity of N-formylmethionyl-tRNA by promoting its recognition by IF2 and preventing the misappropriation of this tRNA by the elongation apparatus. This is Methionyl-tRNA formyltransferase from Wolinella succinogenes (strain ATCC 29543 / DSM 1740 / CCUG 13145 / JCM 31913 / LMG 7466 / NCTC 11488 / FDC 602W) (Vibrio succinogenes).